A 362-amino-acid chain; its full sequence is Holliday junction branch migration complex subunit RuvB (362 aa).

The large ATPase domain (RuvB-L) stretch occupies residues Met-1 to Tyr-183. ATP contacts are provided by residues Leu-22, Arg-23, Gly-64, Lys-67, Thr-68, Thr-69, Glu-130–Phe-132, Arg-173, Tyr-183, and Arg-220. Residue Thr-68 participates in Mg(2+) binding. Residues Ser-184–Glu-254 form a small ATPAse domain (RuvB-S) region. Residues Lys-257–Gln-362 form a head domain (RuvB-H) region. Residues Arg-312 and Arg-317 each contribute to the DNA site.

It belongs to the RuvB family. As to quaternary structure, homohexamer. Forms an RuvA(8)-RuvB(12)-Holliday junction (HJ) complex. HJ DNA is sandwiched between 2 RuvA tetramers; dsDNA enters through RuvA and exits via RuvB. An RuvB hexamer assembles on each DNA strand where it exits the tetramer. Each RuvB hexamer is contacted by two RuvA subunits (via domain III) on 2 adjacent RuvB subunits; this complex drives branch migration. In the full resolvosome a probable DNA-RuvA(4)-RuvB(12)-RuvC(2) complex forms which resolves the HJ.

The protein localises to the cytoplasm. The catalysed reaction is ATP + H2O = ADP + phosphate + H(+). In terms of biological role, the RuvA-RuvB-RuvC complex processes Holliday junction (HJ) DNA during genetic recombination and DNA repair, while the RuvA-RuvB complex plays an important role in the rescue of blocked DNA replication forks via replication fork reversal (RFR). RuvA specifically binds to HJ cruciform DNA, conferring on it an open structure. The RuvB hexamer acts as an ATP-dependent pump, pulling dsDNA into and through the RuvAB complex. RuvB forms 2 homohexamers on either side of HJ DNA bound by 1 or 2 RuvA tetramers; 4 subunits per hexamer contact DNA at a time. Coordinated motions by a converter formed by DNA-disengaged RuvB subunits stimulates ATP hydrolysis and nucleotide exchange. Immobilization of the converter enables RuvB to convert the ATP-contained energy into a lever motion, pulling 2 nucleotides of DNA out of the RuvA tetramer per ATP hydrolyzed, thus driving DNA branch migration. The RuvB motors rotate together with the DNA substrate, which together with the progressing nucleotide cycle form the mechanistic basis for DNA recombination by continuous HJ branch migration. Branch migration allows RuvC to scan DNA until it finds its consensus sequence, where it cleaves and resolves cruciform DNA. The polypeptide is Holliday junction branch migration complex subunit RuvB (Arthrobacter sp. (strain FB24)).